Reading from the N-terminus, the 333-residue chain is MKSILEQLSSITVVVADTGDLDAIKKFQPRDATTNPSLILAAAKNPDYIKLIDQALESSRKSLPAGFSESELIKETIDQVSVFFGKEILNLISGRVSTEVDARLSFDTEATVTKARKLINHYKSFGINKERILIKIASTWEGIKAAEILEKEGIKCNLTLLFNFCQAVACANAKITLISPFVGRILDWHKAKTGKDNFAGCEDPGVISVTKIYNYFKEKGFKTEVMGASFRNIDEIKELAGCDLLTIAPKFLDELNREEGELIKKLDEDTQSQSSIDYKFDEKDFRLSMLEDQMASEKLSEGITGFSKAIEELEELLLKRLSEINNQKLISTT.

Lysine 135 serves as the catalytic Schiff-base intermediate with substrate.

It belongs to the transaldolase family. Type 1 subfamily. In terms of assembly, homodimer.

It localises to the cytoplasm. It carries out the reaction D-sedoheptulose 7-phosphate + D-glyceraldehyde 3-phosphate = D-erythrose 4-phosphate + beta-D-fructose 6-phosphate. Its pathway is carbohydrate degradation; pentose phosphate pathway; D-glyceraldehyde 3-phosphate and beta-D-fructose 6-phosphate from D-ribose 5-phosphate and D-xylulose 5-phosphate (non-oxidative stage): step 2/3. Functionally, transaldolase is important for the balance of metabolites in the pentose-phosphate pathway. The protein is Transaldolase of Prochlorococcus marinus subsp. pastoris (strain CCMP1986 / NIES-2087 / MED4).